A 396-amino-acid polypeptide reads, in one-letter code: Probable sugar efflux transporter (396 aa).

Transmembrane regions (helical) follow at residues 15-35 (VVTLAVAAFIFNTTEFVPVGL), 50-70 (VGIMLTIYAWVVALMSLPFML), 81-101 (LICLFVVFIASHVLSFLSWSF), 103-123 (VLVISRIGVAFAHAIFWSITA), 136-156 (AQALSLIATGTALAMVLGLPL), 170-190 (FFAIGIGALITLLCLIKLLPL), 209-229 (PALMSIYLLTVVVVTAHYTAY), 246-266 (FATALLLLLGGAGIIGSVIFG), 275-295 (ALVSTAIALLLVCLALLLPAA), 299-319 (IHLGMLSIFWGIAMMIIGLGM), 333-353 (VAMALFSGIFNIGIGAGALVG), and 364-384 (MIGYVGAVPAFAALIWSIIIF).

Belongs to the major facilitator superfamily. SotB (TC 2.A.1.2) family.

Its subcellular location is the cell inner membrane. Functionally, involved in the efflux of sugars. The physiological role may be the reduction of the intracellular concentration of toxic sugars or sugar metabolites. In Escherichia coli O6:K15:H31 (strain 536 / UPEC), this protein is Probable sugar efflux transporter.